A 298-amino-acid chain; its full sequence is Mitochondrial basic amino acids transporter (298 aa).

6 helical membrane-spanning segments follow: residues 2-22 (ALDF…GHPF), 61-81 (GLGS…GVQG), 96-116 (FLAG…MELA), 153-172 (GMVS…FLTY), 187-207 (LLVP…WLST), and 255-275 (LLRA…VLSY). Solcar repeat units lie at residues 2–86 (ALDF…TLRA), 90–178 (DSPL…LTRA), and 185–275 (DRLL…VLSY).

The protein belongs to the mitochondrial carrier (TC 2.A.29) family.

It is found in the mitochondrion inner membrane. The enzyme catalyses L-lysine(out) + L-arginine(in) = L-lysine(in) + L-arginine(out). It carries out the reaction L-histidine(out) + L-arginine(in) = L-histidine(in) + L-arginine(out). It catalyses the reaction L-ornithine(in) + L-arginine(out) = L-ornithine(out) + L-arginine(in). The catalysed reaction is L-homoarginine(in) + L-arginine(out) = L-homoarginine(out) + L-arginine(in). The enzyme catalyses N(omega)-methyl-L-arginine(in) + L-arginine(out) = N(omega)-methyl-L-arginine(out) + L-arginine(in). It carries out the reaction L-arginine(in) = L-arginine(out). It catalyses the reaction L-lysine(in) = L-lysine(out). The catalysed reaction is L-ornithine(in) = L-ornithine(out). The enzyme catalyses L-histidine(out) = L-histidine(in). Functionally, mitochondrial transporter of arginine, lysine, homoarginine, methylarginine and, to a much lesser extent, ornithine and histidine. Does not transport carnitine nor acylcarnitines. Functions by both counter-exchange and uniport mechanisms. Plays a physiological role in the import of basic amino acids into mitochondria for mitochondrial protein synthesis and amino acid degradation. The sequence is that of Mitochondrial basic amino acids transporter (SLC25A29) from Bos taurus (Bovine).